Reading from the N-terminus, the 274-residue chain is uncharacterized protein (274 aa).

5 helical membrane-spanning segments follow: residues 9–29 (SLLL…VSIL), 64–84 (WFWH…FFIL), 135–155 (LAGH…ALLL), 165–185 (MSSM…WQNA), and 219–239 (IIVY…LVLG).

The protein belongs to the steroid 5-alpha reductase family.

Its subcellular location is the endoplasmic reticulum membrane. This is an uncharacterized protein from Schizosaccharomyces pombe (strain 972 / ATCC 24843) (Fission yeast).